The following is a 235-amino-acid chain: Probable transcriptional regulatory protein Ccon26_04940 (235 aa).

This sequence belongs to the TACO1 family.

It localises to the cytoplasm. This chain is Probable transcriptional regulatory protein Ccon26_04940, found in Campylobacter concisus (strain 13826).